We begin with the raw amino-acid sequence, 436 residues long: EPS I polysaccharide export inner membrane protein EpsE (436 aa).

12 consecutive transmembrane segments (helical) span residues V20–L40, F49–G69, L91–L111, A133–M153, A160–I180, L185–L205, V234–M254, L261–L281, A307–G327, A341–L361, F375–L395, and G396–F416.

The protein to E.coli bicyclomycin resistance protein (BCR).

The protein localises to the cell inner membrane. Its function is as follows. Probably involved in polymerization and/or export of exopolysaccharide EPS I which functions as a virulence factor. May play a role in export of EPS I or its intermediates across the membranes. The polypeptide is EPS I polysaccharide export inner membrane protein EpsE (epsE) (Ralstonia solanacearum (Pseudomonas solanacearum)).